Here is a 134-residue protein sequence, read N- to C-terminus: Methylglyoxal synthase (134 aa).

Positions 1–134 constitute an MGS-like domain; it reads MHIALIAHDE…DWRDLRRNDE (134 aa). Substrate-binding positions include His8, Lys12, 34 to 37, and 54 to 55; these read TGTT and SG. Asp60 serves as the catalytic Proton donor/acceptor. His87 lines the substrate pocket.

Belongs to the methylglyoxal synthase family.

The catalysed reaction is dihydroxyacetone phosphate = methylglyoxal + phosphate. Its function is as follows. Catalyzes the formation of methylglyoxal from dihydroxyacetone phosphate. This chain is Methylglyoxal synthase, found in Listeria monocytogenes serotype 4b (strain CLIP80459).